Reading from the N-terminus, the 1794-residue chain is MATPRGQTVWFGNEFPNDDLKDLFRRLHQHSKDRRFRLLSVFLDESTAILKEEVANLPQQLQELVPHFDTACTLPEVDFRQGPLGAAMESALLTILELGMLIGNYEAEDIEWDLDPSQTILAGLSIGIIAGAAVALSSSLADVAKVGAESVRVSFRLGVYVADISTKLEAPQSDGTLQSWAHVVTGMSHEAVQEELSQFNAVTQNPEITKVFVSAADKTSVSVTGPPSRIKAAFQHSPSLRYSKSLPLPVYDGLCHAPHLYSQDDIEIVINSAKSVIPTSRPVRLPLISSQTGKPFEAKTAGELFLEIGTELLTGTIYLDNVTAGILEHVKLKEPTGNYQIISFRMSQVLNGIQAAIETDFPALGRARRDLVSWVHGDYGARRPSSYAASKLAIVGMACRLPGGANDPELFWELLEQGRDTLTTVPPDRFDLNTHYDPTGKTENATQTPFGNFIDRPGYFDAGFFNMSPREAEQTDPMHRLALVTAYEAMEMAGLVPGRTPSTRPNRIGTFYGQASDDWRELNASQNISTYAVPGGERAFANGRINYFFKFSGPSYNIDTACSSGLAAVQAACSALWAGEADTVIAGGLNIITDPDNYAGLGNGHFLSKTGQCKVWDKDADGYCRADGIGSVVIKRLEDAEADNDNILAVVLGARTNHSAEAVSITHPHAGAQKANYRQVLHQAGVNPLDVSYVELHGTGTQAGDAVESESVSDVFAPSMPRRRPDQRLYLGAVKSNIGHGEAAAGIASLLKALLVYQKNMIPKHIGIKTEINPIIPKDLDRRHVGLAMSNTPWPRPAGKKRLAVVNSFGAHGGNTTVLLEDAPERVKVSTQDDRTTHPVVISAKSKKSLQANIEKLLSWLDQNPDADLADLSYTLCARRMHHSMRFGAAASDIAALQKTLRSWLDSPKASTELRAIPNDAPSVVLTFTGQGAYYSGMGRELFAEFSYFRTQVLQLDQIAQRLGFPSVVPVIDGSIDDGPASPILTQLSVVVLEIALARFWSHLGIRISAVVGHSLGEYAAFAVAGVISAADALYLVGRRAQLTEERCTQGSHSMLSVRASEDDIEELIAGSPDTAEIAYEVCCRNTPQDTVIGGTKESIDRIRQALEANSIKCTQLDVPFAFHTAQMDPILDSLETLATPIAFKAPSIPVLSPLLGSVVFDRKSIHAQYLRRATREAVDFVAAIEAAQDFGLVDAKTIWIDVGPHPICAGLVRGIDSSASVISSCRRNEDNLATMSKSLVTLHLAGLTPCWAEYFRPREREYSLLKLPTYSWNETDYWIPYIGTWTLDKALLKYGEKKAPLSLAMSRPSALRTSLVHQITAETVEATTATLHVLSDMQHPDFLEALHGHRMNNCGVATSSIWSDMAFTVGEYLYRRLVPQVKDVHMNLSDFEVLHAQVALEKKGSVQPLVLKAHLDLSTSSMSLTWFNASAETGECAAESFATGVVRFEDPAAWTREWDRLSHLVLGRIEALEQRAAEGKASKLSKPLAYALFKNVVDYADRYRGMDQVVLHEHEAVAEVTLVAERHGTWHTPPHWIDSVSHLAGLVMNGSDASNTRDYFYVTPGCSSFRLLNPLKAGGKYRSYVRMFPLLEEANMYAGDVYILQGEQIVGMVGQIRFRRVPRLLMDRFFSPAAASHAEKQLQETAPSATSVKKSTPPAAEAPASVPALLSNPVAIPFPAASKSEVSTPPLTPPSQQESPGESAVITPATSDRGDPVDAGVVGQCLQVMARETGLEVDALTPDASFVQLGIDSLMSLVLSEKFRAELGIEIKSSLFLECPTIGEMTAWLEEYC.

Residues 19–256 (DLKDLFRRLH…PLPVYDGLCH (238 aa)) form an N-terminal acylcarrier protein transacylase domain (SAT) region. Residues 389-822 (ASKLAIVGMA…GGNTTVLLED (434 aa)) enclose the Ketosynthase family 3 (KS3) domain. The tract at residues 427-448 (PDRFDLNTHYDPTGKTENATQT) is disordered. Residues 428-440 (DRFDLNTHYDPTG) are compositionally biased toward basic and acidic residues. Catalysis depends on for beta-ketoacyl synthase activity residues C562, H697, and H740. The segment at 928–1249 (FTGQGAYYSG…LVTLHLAGLT (322 aa)) is malonyl-CoA:ACP transacylase (MAT) domain. A product template (PT) domain region spans residues 1314-1633 (TSLVHQITAE…RLLMDRFFSP (320 aa)). The N-terminal hotdog fold stretch occupies residues 1318–1454 (HQITAETVEA…GVVRFEDPAA (137 aa)). The region spanning 1318 to 1628 (HQITAETVEA…FRRVPRLLMD (311 aa)) is the PKS/mFAS DH domain. H1350 functions as the Proton acceptor; for dehydratase activity in the catalytic mechanism. Residues 1482–1628 (ASKLSKPLAY…FRRVPRLLMD (147 aa)) are C-terminal hotdog fold. The active-site Proton donor; for dehydratase activity is the D1539. Disordered regions lie at residues 1637–1665 (SHAEKQLQETAPSATSVKKSTPPAAEAPA) and 1682–1718 (ASKSEVSTPPLTPPSQQESPGESAVITPATSDRGDPV). Composition is skewed to polar residues over residues 1644 to 1655 (QETAPSATSVKK) and 1685 to 1701 (SEVSTPPLTPPSQQESP). The Carrier domain maps to 1717–1794 (PVDAGVVGQC…EMTAWLEEYC (78 aa)). S1754 is subject to O-(pantetheine 4'-phosphoryl)serine.

Requires pantetheine 4'-phosphate as cofactor.

It functions in the pathway secondary metabolite biosynthesis. Its function is as follows. Non-reducing polyketide synthase; part of the gene cluster that mediates the biosynthesis of neosartoricin, a prenylated anthracenone that exhibits T-cell antiproliferative activity, suggestive of a physiological role as an immunosuppressive agent. The non-reducing polyketide synthase nscA probably synthesizes and cyclizes the decaketide backbone. The hydrolase nscB then mediates the product release through hydrolysis followed by spontaneous decarboxylation. The prenyltransferase nscD catalyzes the addition of the dimethylallyl group to the aromatic C5. The FAD-dependent monooxygenase nscC is then responsible for the stereospecific hydroxylation at C2. There is no gene encoding O-acetyltransferase in the nsc gene cluster; thus, the last step of 2-O-acetylation leading to neosartoricin may be catalyzed by an unidentified O-acetyltransferase. The protein is Non-reducing polyketide synthase nscA of Neosartorya fischeri (strain ATCC 1020 / DSM 3700 / CBS 544.65 / FGSC A1164 / JCM 1740 / NRRL 181 / WB 181) (Aspergillus fischerianus).